A 637-amino-acid polypeptide reads, in one-letter code: Probable potassium transport system protein Kup (637 aa).

The next 12 membrane-spanning stretches (helical) occupy residues 25 to 45 (ISLA…LYAI), 62 to 82 (VLGV…LKYL), 115 to 135 (WFLV…GMIT), 149 to 169 (IIAP…LTGL), 180 to 200 (VGAL…VLGL), 227 to 247 (LQGF…EALY), 263 to 283 (ILFV…LLLF), 295 to 315 (LVPS…TIIA), 352 to 372 (IYVP…VIGF), 378 to 398 (LAAA…ILFY), 410 to 430 (LATN…FGAS), and 434 to 454 (LFHG…LMLT).

The protein belongs to the HAK/KUP transporter (TC 2.A.72) family.

The protein localises to the cell inner membrane. The enzyme catalyses K(+)(in) + H(+)(in) = K(+)(out) + H(+)(out). Functionally, transport of potassium into the cell. Likely operates as a K(+):H(+) symporter. The chain is Probable potassium transport system protein Kup from Chlorobium phaeobacteroides (strain DSM 266 / SMG 266 / 2430).